A 170-amino-acid chain; its full sequence is Peptide deformylase (170 aa).

Fe cation-binding residues include Cys-88 and His-130. Glu-131 is a catalytic residue. His-134 is a Fe cation binding site.

The protein belongs to the polypeptide deformylase family. Fe(2+) serves as cofactor.

The enzyme catalyses N-terminal N-formyl-L-methionyl-[peptide] + H2O = N-terminal L-methionyl-[peptide] + formate. Removes the formyl group from the N-terminal Met of newly synthesized proteins. Requires at least a dipeptide for an efficient rate of reaction. N-terminal L-methionine is a prerequisite for activity but the enzyme has broad specificity at other positions. The sequence is that of Peptide deformylase from Acetivibrio thermocellus (strain ATCC 27405 / DSM 1237 / JCM 9322 / NBRC 103400 / NCIMB 10682 / NRRL B-4536 / VPI 7372) (Clostridium thermocellum).